Consider the following 143-residue polypeptide: Hemoglobin subunit alpha (143 aa).

The residue at position 2 (Ser-2) is an N-acetylserine. Positions 2-143 constitute a Globin domain; the sequence is SLSDTDKAVV…LALALSEKYR (142 aa). His-60 lines the O2 pocket. His-89 provides a ligand contact to heme b.

Belongs to the globin family. Heterotetramer of two alpha chains and two beta chains. In terms of tissue distribution, red blood cells.

Its function is as follows. Involved in oxygen transport from gills to the various peripheral tissues. The chain is Hemoglobin subunit alpha (hbaa1) from Danio rerio (Zebrafish).